The sequence spans 362 residues: RING finger protein 32 (362 aa).

The segment at 127-169 (CPICKEEFELRPQVLLSCSHVFHKACLQAFEKFTNKKTCPLCR) adopts an RING-type 1; atypical zinc-finger fold. The IQ domain occupies 186 to 215 (RIKCVTRIQAYWRGCVVRKWYRNLRKTVPP). The segment at 293–352 (CSICLAPLSAAGGQRVGAGRRSREMALLSCSHVFHHACLLALEEFSVGDRPPFHACPLCR) adopts an RING-type 2; atypical zinc-finger fold.

In terms of tissue distribution, highly expressed in testis, less abundant in ovary.

It localises to the cytoplasm. In terms of biological role, may play a role in sperm formation. The polypeptide is RING finger protein 32 (RNF32) (Homo sapiens (Human)).